A 32-amino-acid chain; its full sequence is Potassium channel toxin alpha-KTx 10.6 (32 aa).

3 disulfide bridges follow: C3–C22, C8–C27, and C12–C29.

In terms of tissue distribution, expressed by the venom gland.

Its subcellular location is the secreted. In terms of biological role, blocks human voltage-gated potassium (Kv) channels Kv1.2/KCNA2 and Kv1.3/KCNA3. Does not block human Kv1.1 at 100nM concentration. The chain is Potassium channel toxin alpha-KTx 10.6 from Centruroides bonito (Scorpion).